We begin with the raw amino-acid sequence, 855 residues long: Probable inactive ATP-dependent zinc metalloprotease FTSHI 4, chloroplastic (855 aa).

The N-terminal 78 residues, 1–78 (MTFYISSSLT…SFESTESSVS (78 aa)), are a transit peptide targeting the chloroplast. A helical membrane pass occupies residues 242–262 (VATFVVWSMRLALFVSLYVWI). ATP is bound at residue 356 to 363 (GPPGTGKT).

It belongs to the AAA ATPase family. Homooligomer. Interacts with FtsHi2. In terms of tissue distribution, ubiquitous but preferentially expressed in young leaves.

It is found in the plastid. Its subcellular location is the chloroplast thylakoid membrane. Functionally, functions in chloroplast biogenesis and chloroplast division. Required for plastid development during embryogenesis. Might be involved in chaperone functions or play a structural role in the thylakoid FtsH complex. The chain is Probable inactive ATP-dependent zinc metalloprotease FTSHI 4, chloroplastic from Arabidopsis thaliana (Mouse-ear cress).